The chain runs to 37 residues: Large ribosomal subunit protein bL36 (37 aa).

This sequence belongs to the bacterial ribosomal protein bL36 family.

This Mycobacterium tuberculosis (strain ATCC 25618 / H37Rv) protein is Large ribosomal subunit protein bL36 (rpmJ).